Consider the following 585-residue polypeptide: Proline-rich protein 14 (585 aa).

Met1 is modified (N-acetylmethionine). A sufficient for heterochromatin association in interphase and chromatin association in anaphase region spans residues 1–135 (MDLPGDSSPP…TLRRRSRTTP (135 aa)). 3 disordered regions span residues 23-46 (ALWGARSPKRPRLQLPGAPSPLEK), 73-150 (TSIP…RAPQ), and 189-241 (IVRQ…RPRL). Positions 85–378 (PVHRQPPASP…MARAPPPPRP (294 aa)) are required for the interaction with GRB2 and sufficient to promote the phosphorylation of AKT and cell proliferation. Over residues 119–132 (RIHRTSSTLRRRSR) the composition is skewed to basic residues. The tract at residues 136–365 (GPEEGPSQKV…RPRPRRHTVG (230 aa)) is required for nuclear lamina association. Pro residues predominate over residues 193–205 (PTPPPGDLEPPFQ). Ser277 carries the post-translational modification Phosphoserine. 2 disordered regions span residues 290–445 (EAEQ…KVSR) and 525–557 (DSSLPRSRRPSRGVRAAGGRTVPPNVAPSPDVG). Residues 337–356 (LGPPGPGTCTWPPAPPQPSR) show a composition bias toward pro residues. Low complexity predominate over residues 393-409 (SPSLTTSCSSTASTSFS). The tract at residues 518-535 (RRAVEFRDSSLPRSRRPS) is required for nuclear localization.

In terms of assembly, interacts (via proline-rich region) with GRB2 (via SH3 domain 2). Interacts (via N-terminus) with CBX5.

It localises to the chromosome. It is found in the nucleus. The protein localises to the nucleus lamina. Its subcellular location is the nucleoplasm. In terms of biological role, functions in tethering peripheral heterochromatin to the nuclear lamina during interphase, possibly through the interaction with heterochromatin protein CBX5/HP1 alpha. Might play a role in reattaching heterochromatin to the nuclear lamina at mitotic exit. Promotes myoblast differentiation during skeletal myogenesis, possibly by stimulating transcription factor MyoD activity via binding to CBX5/HP1 alpha. Involved in the positive regulation of the PI3K-Akt-mTOR signaling pathway and in promoting cell proliferation, possibly via binding to GRB2. In Homo sapiens (Human), this protein is Proline-rich protein 14 (PRR14).